Here is a 559-residue protein sequence, read N- to C-terminus: Probable D-2-hydroxyglutarate dehydrogenase, mitochondrial (559 aa).

The N-terminal 80 residues, 1–80 (MARRAAAGLL…MNFEVQKRSF (80 aa)), are a transit peptide targeting the mitochondrion. Residues 131-310 (YKGSSQLLLL…TKIAILTPAK (180 aa)) form the FAD-binding PCMH-type domain.

Belongs to the FAD-binding oxidoreductase/transferase type 4 family. As to quaternary structure, homodimer. It depends on FAD as a cofactor.

It localises to the mitochondrion. The catalysed reaction is (R)-2-hydroxyglutarate + A = 2-oxoglutarate + AH2. Functionally, catalyzes the oxidation of D-2-hydroxyglutarate to alpha-ketoglutarate. The polypeptide is Probable D-2-hydroxyglutarate dehydrogenase, mitochondrial (D2HGDH) (Oryza sativa subsp. japonica (Rice)).